The chain runs to 87 residues: Small ribosomal subunit protein uS19 (87 aa).

It belongs to the universal ribosomal protein uS19 family.

Its function is as follows. Protein S19 forms a complex with S13 that binds strongly to the 16S ribosomal RNA. The sequence is that of Small ribosomal subunit protein uS19 from Mesoplasma florum (strain ATCC 33453 / NBRC 100688 / NCTC 11704 / L1) (Acholeplasma florum).